Consider the following 147-residue polypeptide: MKVLLIKDVKALGKAGEIKEVKDGYGQNFLIAKGFAKAATNEVLRKYESDKKKEAENLRFEIANLEKLKEELSKITLEISKPVGANGSLFGGVTKDEIAHALKEQSHIEIDKKSLECDTLKSLGIHEVSVKLGHAIHAKFNINIKAE.

This sequence belongs to the bacterial ribosomal protein bL9 family.

Binds to the 23S rRNA. The polypeptide is Large ribosomal subunit protein bL9 (Campylobacter jejuni subsp. jejuni serotype O:2 (strain ATCC 700819 / NCTC 11168)).